A 54-amino-acid polypeptide reads, in one-letter code: MPQLVPFYFVNEITFTFVIITLMVYILSKYILPRFVRLFLSRTFISKLSDISKK.

The chain crosses the membrane as a helical span at residues 13 to 32; the sequence is ITFTFVIITLMVYILSKYIL.

This sequence belongs to the ATPase protein 8 family. F-type ATPases have 2 components, CF(1) - the catalytic core - and CF(0) - the membrane proton channel.

It is found in the mitochondrion membrane. Functionally, mitochondrial membrane ATP synthase (F(1)F(0) ATP synthase or Complex V) produces ATP from ADP in the presence of a proton gradient across the membrane which is generated by electron transport complexes of the respiratory chain. F-type ATPases consist of two structural domains, F(1) - containing the extramembraneous catalytic core and F(0) - containing the membrane proton channel, linked together by a central stalk and a peripheral stalk. During catalysis, ATP synthesis in the catalytic domain of F(1) is coupled via a rotary mechanism of the central stalk subunits to proton translocation. Part of the complex F(0) domain. Minor subunit located with subunit a in the membrane. This Neurospora crassa (strain ATCC 24698 / 74-OR23-1A / CBS 708.71 / DSM 1257 / FGSC 987) protein is ATP synthase protein 8 (atp-8).